A 236-amino-acid polypeptide reads, in one-letter code: 2-C-methyl-D-erythritol 4-phosphate cytidylyltransferase (236 aa).

This sequence belongs to the IspD/TarI cytidylyltransferase family. IspD subfamily.

The catalysed reaction is 2-C-methyl-D-erythritol 4-phosphate + CTP + H(+) = 4-CDP-2-C-methyl-D-erythritol + diphosphate. It participates in isoprenoid biosynthesis; isopentenyl diphosphate biosynthesis via DXP pathway; isopentenyl diphosphate from 1-deoxy-D-xylulose 5-phosphate: step 2/6. Catalyzes the formation of 4-diphosphocytidyl-2-C-methyl-D-erythritol from CTP and 2-C-methyl-D-erythritol 4-phosphate (MEP). The chain is 2-C-methyl-D-erythritol 4-phosphate cytidylyltransferase from Burkholderia vietnamiensis (strain G4 / LMG 22486) (Burkholderia cepacia (strain R1808)).